We begin with the raw amino-acid sequence, 171 residues long: Disulfide bond formation protein B (171 aa).

Residues 1 to 10 are Cytoplasmic-facing; sequence MQRLLTYRAL. The helical transmembrane segment at 11–27 threads the bilayer; it reads NFILFIASVVAMLFAII. At 28 to 46 the chain is on the periplasmic side; it reads FLQNYKGLEPCPLCIFQRI. Cysteine 38 and cysteine 41 are joined by a disulfide. Residues 47–63 form a helical membrane-spanning segment; it reads GLMVMGGFSLIAAVGHP. Topologically, residues 64–70 are cytoplasmic; sequence KKMGMQL. A helical membrane pass occupies residues 71-88; sequence LLWIGSMAGILWSAGVAA. Residues 89–145 are Periplasmic-facing; the sequence is RHVWIQHLPADQVPACGPGLDYFLEALPMKQVINQVLSGSGECAEISWRFLGLSIPE. A disulfide bridge connects residues cysteine 104 and cysteine 131. The chain crosses the membrane as a helical span at residues 146–164; it reads QALILFTALILVNLLVLWR. Topologically, residues 165 to 171 are cytoplasmic; sequence IISKRTA.

This sequence belongs to the DsbB family.

It localises to the cell inner membrane. Required for disulfide bond formation in some periplasmic proteins. Acts by oxidizing the DsbA protein. The protein is Disulfide bond formation protein B of Psychrobacter sp. (strain PRwf-1).